Reading from the N-terminus, the 495-residue chain is Probable cytosol aminopeptidase (495 aa).

Residues Lys264 and Asp269 each contribute to the Mn(2+) site. Residue Lys276 is part of the active site. Positions 287, 346, and 348 each coordinate Mn(2+). The active site involves Arg350.

Belongs to the peptidase M17 family. Mn(2+) is required as a cofactor.

The protein resides in the cytoplasm. It catalyses the reaction Release of an N-terminal amino acid, Xaa-|-Yaa-, in which Xaa is preferably Leu, but may be other amino acids including Pro although not Arg or Lys, and Yaa may be Pro. Amino acid amides and methyl esters are also readily hydrolyzed, but rates on arylamides are exceedingly low.. The catalysed reaction is Release of an N-terminal amino acid, preferentially leucine, but not glutamic or aspartic acids.. In terms of biological role, presumably involved in the processing and regular turnover of intracellular proteins. Catalyzes the removal of unsubstituted N-terminal amino acids from various peptides. The chain is Probable cytosol aminopeptidase from Geotalea uraniireducens (strain Rf4) (Geobacter uraniireducens).